Here is a 126-residue protein sequence, read N- to C-terminus: Phosphoribosyl-AMP cyclohydrolase (126 aa).

Mg(2+) is bound at residue aspartate 76. A Zn(2+)-binding site is contributed by cysteine 77. Residues aspartate 78 and aspartate 80 each coordinate Mg(2+). Residues cysteine 94 and cysteine 101 each contribute to the Zn(2+) site.

This sequence belongs to the PRA-CH family. In terms of assembly, homodimer. The cofactor is Mg(2+). Zn(2+) serves as cofactor.

Its subcellular location is the cytoplasm. The enzyme catalyses 1-(5-phospho-beta-D-ribosyl)-5'-AMP + H2O = 1-(5-phospho-beta-D-ribosyl)-5-[(5-phospho-beta-D-ribosylamino)methylideneamino]imidazole-4-carboxamide. It functions in the pathway amino-acid biosynthesis; L-histidine biosynthesis; L-histidine from 5-phospho-alpha-D-ribose 1-diphosphate: step 3/9. In terms of biological role, catalyzes the hydrolysis of the adenine ring of phosphoribosyl-AMP. The chain is Phosphoribosyl-AMP cyclohydrolase from Nitratidesulfovibrio vulgaris (strain ATCC 29579 / DSM 644 / CCUG 34227 / NCIMB 8303 / VKM B-1760 / Hildenborough) (Desulfovibrio vulgaris).